The primary structure comprises 141 residues: Large ribosomal subunit protein uL11 (141 aa).

It belongs to the universal ribosomal protein uL11 family. In terms of assembly, part of the ribosomal stalk of the 50S ribosomal subunit. Interacts with L10 and the large rRNA to form the base of the stalk. L10 forms an elongated spine to which L12 dimers bind in a sequential fashion forming a multimeric L10(L12)X complex. Post-translationally, one or more lysine residues are methylated.

Functionally, forms part of the ribosomal stalk which helps the ribosome interact with GTP-bound translation factors. This Campylobacter lari (strain RM2100 / D67 / ATCC BAA-1060) protein is Large ribosomal subunit protein uL11.